We begin with the raw amino-acid sequence, 261 residues long: tRNA U34 carboxymethyltransferase (261 aa).

Residues Lys-25, Trp-39, Lys-44, Gly-63, 114 to 115 (VE), Tyr-135, and Arg-250 contribute to the carboxy-S-adenosyl-L-methionine site.

It belongs to the class I-like SAM-binding methyltransferase superfamily. CmoB family. In terms of assembly, homotetramer.

The catalysed reaction is carboxy-S-adenosyl-L-methionine + 5-hydroxyuridine(34) in tRNA = 5-carboxymethoxyuridine(34) in tRNA + S-adenosyl-L-homocysteine + H(+). Functionally, catalyzes carboxymethyl transfer from carboxy-S-adenosyl-L-methionine (Cx-SAM) to 5-hydroxyuridine (ho5U) to form 5-carboxymethoxyuridine (cmo5U) at position 34 in tRNAs. The chain is tRNA U34 carboxymethyltransferase from Helicobacter pylori (strain P12).